The following is a 502-amino-acid chain: Serine/threonine-protein kinase SKS1 (502 aa).

Residues 10–338 (FRITAQIGSG…SEVSSLTSFT (329 aa)) form the Protein kinase domain. Residues 16–24 (IGSGAYGLV) and lysine 39 each bind ATP. Aspartate 186 serves as the catalytic Proton acceptor. 2 stretches are compositionally biased toward low complexity: residues 376–391 (QEQQ…QVQE) and 399–410 (EQIQNQEQAQQQ). Residues 376 to 439 (QEQQQQQQQQ…GSMEKYEYTN (64 aa)) form a disordered region. The segment covering 411 to 420 (QEEEDAEPES) has biased composition (acidic residues).

Belongs to the protein kinase superfamily. Ser/Thr protein kinase family.

The catalysed reaction is L-seryl-[protein] + ATP = O-phospho-L-seryl-[protein] + ADP + H(+). It catalyses the reaction L-threonyl-[protein] + ATP = O-phospho-L-threonyl-[protein] + ADP + H(+). Functionally, may have a role in glucose regulation. This Saccharomyces cerevisiae (strain ATCC 204508 / S288c) (Baker's yeast) protein is Serine/threonine-protein kinase SKS1 (SKS1).